The primary structure comprises 325 residues: Diadenosine 5',5'''-P1,P4-tetraphosphate phosphorylase 2 (325 aa).

Substrate contacts are provided by residues lysine 53, 92-93 (NK), asparagine 148, and 154-157 (GSSQ). Catalysis depends on histidine 161, which acts as the Nucleophile. Substrate is bound by residues glutamine 163, 277–279 (NST), methionine 284, and lysine 288.

Belongs to the ATP adenylyltransferase family. Monomer. It depends on a divalent metal cation as a cofactor.

The protein resides in the cytoplasm. It is found in the nucleus. It catalyses the reaction ADP + ATP + H(+) = P(1),P(4)-bis(5'-adenosyl) tetraphosphate + phosphate. The enzyme catalyses sulfate + ADP + H(+) = adenosine 5'-phosphosulfate + phosphate. Its function is as follows. Ap4A phosphorylase catalyzes the phosphorolytic degradation of bis(5'-adenosyl) tetraphosphate (Ap4A) into ADP and ATP. Can also use other Np4N' nucleotides (where N and N' stand for A,C,G or U) as substrates, but prefers A-containing substrates. Cannot catalyze the reverse reaction. Additionally, this enzyme can also catalyze the phosphorolytic degradation of adenosine 5'-phosphosulfate (AMPS) into ADP and sulfate, the reversible exchange reaction between inorganic phosphate and the beta-phosphate of a nucleoside diphosphate (NDP), and the synthesis of Ap4A from AMPS plus ATP. In Saccharomyces cerevisiae (strain ATCC 204508 / S288c) (Baker's yeast), this protein is Diadenosine 5',5'''-P1,P4-tetraphosphate phosphorylase 2.